Consider the following 323-residue polypeptide: Galectin-4 (323 aa).

2 Galectin domains span residues 19-150 and 194-323; these read YYQP…INFI and YFGR…YVQI. 256 to 262 is a binding site for a beta-D-galactoside; sequence WGSEEKK. A Phosphoserine modification is found at S258.

In terms of assembly, monomer.

In terms of biological role, galectin that binds lactose and a related range of sugars. May be involved in the assembly of adherens junctions. The chain is Galectin-4 (LGALS4) from Homo sapiens (Human).